Consider the following 146-residue polypeptide: Large ribosomal subunit protein uL15y (146 aa).

2 stretches are compositionally biased toward basic residues: residues 1–14 (MATALKKNRKKRGH) and 21–30 (RIGKHRKHPG). Residues 1–38 (MATALKKNRKKRGHVSAGHGRIGKHRKHPGGRGNAGGM) are disordered.

This sequence belongs to the universal ribosomal protein uL15 family.

This chain is Large ribosomal subunit protein uL15y (RPL27AB), found in Arabidopsis thaliana (Mouse-ear cress).